The following is a 123-amino-acid chain: Large ribosomal subunit protein uL24 (123 aa).

The protein belongs to the universal ribosomal protein uL24 family. As to quaternary structure, part of the 50S ribosomal subunit.

Functionally, one of two assembly initiator proteins, it binds directly to the 5'-end of the 23S rRNA, where it nucleates assembly of the 50S subunit. In terms of biological role, one of the proteins that surrounds the polypeptide exit tunnel on the outside of the subunit. The sequence is that of Large ribosomal subunit protein uL24 from Solibacter usitatus (strain Ellin6076).